A 20-amino-acid polypeptide reads, in one-letter code: Putative 18 kDa spermidine-binding protein (20 aa).

In terms of assembly, dimer of 18 kDa and 60 kDa subunit.

The protein localises to the microsome membrane. It localises to the endoplasmic reticulum membrane. Functionally, may have spermidine-binding activity. This chain is Putative 18 kDa spermidine-binding protein, found in Zea mays (Maize).